The primary structure comprises 152 residues: Transcriptional regulator MraZ (152 aa).

2 SpoVT-AbrB domains span residues 5 to 52 (ASAI…PIHE) and 81 to 124 (AHEC…DEAA).

The protein belongs to the MraZ family. Forms oligomers.

The protein localises to the cytoplasm. It localises to the nucleoid. This chain is Transcriptional regulator MraZ, found in Shewanella pealeana (strain ATCC 700345 / ANG-SQ1).